An 83-amino-acid polypeptide reads, in one-letter code: Small ribosomal subunit protein bS16 (83 aa).

Belongs to the bacterial ribosomal protein bS16 family.

This chain is Small ribosomal subunit protein bS16, found in Magnetococcus marinus (strain ATCC BAA-1437 / JCM 17883 / MC-1).